Here is a 346-residue protein sequence, read N- to C-terminus: MTLDDDDYIKQMELQRKAFESQFGSLESMGFEDKTKNIRTEVDTRDSSGDEIDNSDHGSDFKDGTIESSNSSDEDSGNETAEENNQDSKPKTQPKVIRFNGPSDVYVPPSKKTQKLLRSGKTLTQINKKLESTEAKEEKEDETLEAENLQNDLELQQFLRESHLLSAFNNGGSGSTNSGVSLTLQSMGGGNDDGIVYQDDQVIGKARSRTLEMRLNRLSRVNGHQDKINKLEKVPMHIRRGMIDKHVKRIKKYEQEAAEGGIVLSKVKKGQFRKIESTYKKDIERRIGGSIKARDKEKATKRERGLKISSVGRSTRNGLIVSKRDIARISGGERSGKFNGKKKSRR.

Disordered stretches follow at residues Q22–G120 and K323–R346. A compositionally biased stretch (basic and acidic residues) spans F31–T65. Over residues S72–N85 the composition is skewed to acidic residues.

As to quaternary structure, interacts with KRR1.

It is found in the nucleus. Its subcellular location is the nucleolus. Functionally, required for pre-rRNA processing and 40S ribosomal subunit assembly. Seems to act in the processing of 35S rRNA at the A(0), A(1), and A(2) cleavage sites. This is Protein FAF1 (FAF1) from Saccharomyces cerevisiae (strain ATCC 204508 / S288c) (Baker's yeast).